A 354-amino-acid polypeptide reads, in one-letter code: Deoxyribonuclease-2-beta (354 aa).

An N-terminal signal peptide occupies residues 1–22 (MTAKPLRTVLSLLFFALSGVLG). N-linked (GlcNAc...) asparagine glycans are attached at residues asparagine 70, asparagine 77, asparagine 95, asparagine 98, asparagine 114, asparagine 129, asparagine 208, asparagine 271, and asparagine 319.

This sequence belongs to the DNase II family. Highly expressed in the eye lens. Detected in liver, but not in the other tissues tested.

The protein localises to the lysosome. The enzyme catalyses Endonucleolytic cleavage to nucleoside 3'-phosphates and 3'-phosphooligonucleotide end-products.. Hydrolyzes DNA under acidic conditions. Does not require divalent cations for activity. Participates in the degradation of nuclear DNA during lens cell differentiation. The protein is Deoxyribonuclease-2-beta (Dnase2b) of Mus musculus (Mouse).